Reading from the N-terminus, the 428-residue chain is tRNA(Ile)-lysidine synthase (428 aa).

Residue 25-30 participates in ATP binding; that stretch reads SGGIDS.

The protein belongs to the tRNA(Ile)-lysidine synthase family.

It is found in the cytoplasm. It catalyses the reaction cytidine(34) in tRNA(Ile2) + L-lysine + ATP = lysidine(34) in tRNA(Ile2) + AMP + diphosphate + H(+). In terms of biological role, ligates lysine onto the cytidine present at position 34 of the AUA codon-specific tRNA(Ile) that contains the anticodon CAU, in an ATP-dependent manner. Cytidine is converted to lysidine, thus changing the amino acid specificity of the tRNA from methionine to isoleucine. The polypeptide is tRNA(Ile)-lysidine synthase (Haemophilus ducreyi (strain 35000HP / ATCC 700724)).